Reading from the N-terminus, the 406-residue chain is Phosphoglycerate kinase (406 aa).

Residues 23-25, R38, 61-64, R117, and R157 each bind substrate; these read DIN and HQGR. ATP-binding positions include E331 and 357–360; that span reads GGHI.

This sequence belongs to the phosphoglycerate kinase family. As to quaternary structure, monomer.

The protein localises to the cytoplasm. The enzyme catalyses (2R)-3-phosphoglycerate + ATP = (2R)-3-phospho-glyceroyl phosphate + ADP. The protein operates within carbohydrate degradation; glycolysis; pyruvate from D-glyceraldehyde 3-phosphate: step 2/5. This is Phosphoglycerate kinase from Methanopyrus kandleri (strain AV19 / DSM 6324 / JCM 9639 / NBRC 100938).